The primary structure comprises 140 residues: UPF0102 protein ACIAD1132 (140 aa).

The protein belongs to the UPF0102 family.

In Acinetobacter baylyi (strain ATCC 33305 / BD413 / ADP1), this protein is UPF0102 protein ACIAD1132.